The following is a 286-amino-acid chain: 3-hydroxyanthranilate 3,4-dioxygenase (286 aa).

A domain A (catalytic) region spans residues 1-160; that stretch reads MERRLGVRAW…SEQYRTGKPI (160 aa). Arg-43 is a binding site for O2. The Fe cation site is built by His-47, Glu-53, and His-91. Glu-53 contributes to the substrate binding site. The substrate site is built by Arg-95 and Glu-105. The segment at 161–177 is linker; sequence PDQLLKEPPFPLSTRSI. Residues 178–286 are domain B; the sequence is MEPMSLDAWL…QDPACKKPLG (109 aa).

This sequence belongs to the 3-HAO family. In terms of assembly, monomer. Requires Fe(2+) as cofactor.

Its subcellular location is the cytoplasm. The protein resides in the cytosol. It carries out the reaction 3-hydroxyanthranilate + O2 = (2Z,4Z)-2-amino-3-carboxymuconate 6-semialdehyde. It participates in cofactor biosynthesis; NAD(+) biosynthesis; quinolinate from L-kynurenine: step 3/3. Functionally, catalyzes the oxidative ring opening of 3-hydroxyanthranilate to 2-amino-3-carboxymuconate semialdehyde, which spontaneously cyclizes to quinolinate. The polypeptide is 3-hydroxyanthranilate 3,4-dioxygenase (Homo sapiens (Human)).